We begin with the raw amino-acid sequence, 138 residues long: Ribosome maturation factor RimP (138 aa).

The protein belongs to the RimP family.

The protein resides in the cytoplasm. In terms of biological role, required for maturation of 30S ribosomal subunits. This chain is Ribosome maturation factor RimP, found in Campylobacter concisus (strain 13826).